A 251-amino-acid chain; its full sequence is 5-oxoprolinase subunit A (251 aa).

The protein belongs to the LamB/PxpA family. As to quaternary structure, forms a complex composed of PxpA, PxpB and PxpC.

The catalysed reaction is 5-oxo-L-proline + ATP + 2 H2O = L-glutamate + ADP + phosphate + H(+). Its function is as follows. Catalyzes the cleavage of 5-oxoproline to form L-glutamate coupled to the hydrolysis of ATP to ADP and inorganic phosphate. In Vibrio parahaemolyticus serotype O3:K6 (strain RIMD 2210633), this protein is 5-oxoprolinase subunit A.